Consider the following 104-residue polypeptide: Flagellar hook-basal body complex protein FliE (104 aa).

The protein belongs to the FliE family.

The protein resides in the bacterial flagellum basal body. This chain is Flagellar hook-basal body complex protein FliE, found in Salmonella newport (strain SL254).